The following is a 253-amino-acid chain: MRKPIIAGNWKMNKTLGEAVSFVEEVKSSIPYPDKVEAIVCAPALFLEKLNSLSNGTDLKIGAQNMHFEENGAFTGEISPAALKDLGIGYSVIGHSERREFFAETDETVNKKAHAAFKHGIVPIICVGETLEEREAGKTNELVADQVKKALAGFTTQQVAESVIAYEPIWAIGTGKSSTAKDANDVCAHIRQTVASEYGQEAADSLRIQYGGSVKPANIKEYMAESDIDGALVGGASLEPQSFVQLLEEGQYE.

9 to 11 (NWK) contributes to the substrate binding site. Histidine 95 functions as the Electrophile in the catalytic mechanism. The active-site Proton acceptor is glutamate 167. Substrate-binding positions include glycine 173, serine 213, and 234-235 (GG). Serine 213 carries the phosphoserine modification.

The protein belongs to the triosephosphate isomerase family. As to quaternary structure, homodimer.

Its subcellular location is the cytoplasm. The enzyme catalyses D-glyceraldehyde 3-phosphate = dihydroxyacetone phosphate. The protein operates within carbohydrate biosynthesis; gluconeogenesis. It participates in carbohydrate degradation; glycolysis; D-glyceraldehyde 3-phosphate from glycerone phosphate: step 1/1. In terms of biological role, involved in the gluconeogenesis. Catalyzes stereospecifically the conversion of dihydroxyacetone phosphate (DHAP) to D-glyceraldehyde-3-phosphate (G3P). The chain is Triosephosphate isomerase from Bacillus pumilus (strain SAFR-032).